The chain runs to 503 residues: Aspartyl/glutamyl-tRNA(Asn/Gln) amidotransferase subunit B (503 aa).

It belongs to the GatB/GatE family. GatB subfamily. In terms of assembly, heterotrimer of A, B and C subunits.

It catalyses the reaction L-glutamyl-tRNA(Gln) + L-glutamine + ATP + H2O = L-glutaminyl-tRNA(Gln) + L-glutamate + ADP + phosphate + H(+). The enzyme catalyses L-aspartyl-tRNA(Asn) + L-glutamine + ATP + H2O = L-asparaginyl-tRNA(Asn) + L-glutamate + ADP + phosphate + 2 H(+). Functionally, allows the formation of correctly charged Asn-tRNA(Asn) or Gln-tRNA(Gln) through the transamidation of misacylated Asp-tRNA(Asn) or Glu-tRNA(Gln) in organisms which lack either or both of asparaginyl-tRNA or glutaminyl-tRNA synthetases. The reaction takes place in the presence of glutamine and ATP through an activated phospho-Asp-tRNA(Asn) or phospho-Glu-tRNA(Gln). This chain is Aspartyl/glutamyl-tRNA(Asn/Gln) amidotransferase subunit B, found in Mycobacterium avium (strain 104).